The primary structure comprises 311 residues: Aspartate carbamoyltransferase catalytic subunit (311 aa).

2 residues coordinate carbamoyl phosphate: Arg-55 and Thr-56. Lys-85 is a binding site for L-aspartate. 3 residues coordinate carbamoyl phosphate: Arg-106, His-135, and Gln-138. L-aspartate-binding residues include Arg-168 and Arg-230. The carbamoyl phosphate site is built by Leu-268 and Pro-269.

The protein belongs to the aspartate/ornithine carbamoyltransferase superfamily. ATCase family. As to quaternary structure, heterododecamer (2C3:3R2) of six catalytic PyrB chains organized as two trimers (C3), and six regulatory PyrI chains organized as three dimers (R2).

The enzyme catalyses carbamoyl phosphate + L-aspartate = N-carbamoyl-L-aspartate + phosphate + H(+). The protein operates within pyrimidine metabolism; UMP biosynthesis via de novo pathway; (S)-dihydroorotate from bicarbonate: step 2/3. Its function is as follows. Catalyzes the condensation of carbamoyl phosphate and aspartate to form carbamoyl aspartate and inorganic phosphate, the committed step in the de novo pyrimidine nucleotide biosynthesis pathway. This is Aspartate carbamoyltransferase catalytic subunit from Salmonella arizonae (strain ATCC BAA-731 / CDC346-86 / RSK2980).